Here is a 60-residue protein sequence, read N- to C-terminus: Sperm protamine P1 (60 aa).

The interval 1 to 60 (MARYRHSRSRSRSRYRRRRRRRSRYRSRRRRXRRRRRSRRGRRRRGYSRRRYSRRRRRRY) is disordered.

The protein belongs to the protamine P1 family. Testis.

The protein resides in the nucleus. The protein localises to the chromosome. In terms of biological role, protamines substitute for histones in the chromatin of sperm during the haploid phase of spermatogenesis. They compact sperm DNA into a highly condensed, stable and inactive complex. The protein is Sperm protamine P1 (PRM1) of Petrogale concinna (Nabarlek).